We begin with the raw amino-acid sequence, 284 residues long: 2-dehydro-3-deoxyphosphooctonate aldolase (284 aa).

Belongs to the KdsA family.

Its subcellular location is the cytoplasm. The catalysed reaction is D-arabinose 5-phosphate + phosphoenolpyruvate + H2O = 3-deoxy-alpha-D-manno-2-octulosonate-8-phosphate + phosphate. It participates in carbohydrate biosynthesis; 3-deoxy-D-manno-octulosonate biosynthesis; 3-deoxy-D-manno-octulosonate from D-ribulose 5-phosphate: step 2/3. It functions in the pathway bacterial outer membrane biogenesis; lipopolysaccharide biosynthesis. This Haemophilus influenzae (strain PittEE) protein is 2-dehydro-3-deoxyphosphooctonate aldolase.